A 255-amino-acid polypeptide reads, in one-letter code: ATP synthase subunit a 2 (255 aa).

The next 5 membrane-spanning stretches (helical) occupy residues 24-44 (WFGI…VFIL), 86-106 (LIGP…AVDL), 131-151 (DINI…GYTF), 205-225 (MIFI…SVPW), and 226-246 (ALFH…LTVV).

This sequence belongs to the ATPase A chain family. In terms of assembly, F-type ATPases have 2 components, CF(1) - the catalytic core - and CF(0) - the membrane proton channel. CF(1) has five subunits: alpha(3), beta(3), gamma(1), delta(1), epsilon(1). CF(0) has three main subunits: a(1), b(2) and c(9-12). The alpha and beta chains form an alternating ring which encloses part of the gamma chain. CF(1) is attached to CF(0) by a central stalk formed by the gamma and epsilon chains, while a peripheral stalk is formed by the delta and b chains.

The protein resides in the cell inner membrane. Its function is as follows. Key component of the proton channel; it plays a direct role in the translocation of protons across the membrane. This chain is ATP synthase subunit a 2, found in Vibrio campbellii (strain ATCC BAA-1116).